Reading from the N-terminus, the 549-residue chain is Lipase 1 (549 aa).

A signal peptide spans 1 to 15; the sequence is MELALALSLIASVAA. The cysteines at positions 75 and 112 are disulfide-linked. Catalysis depends on serine 224, which acts as the Acyl-ester intermediate. Cysteines 283 and 292 form a disulfide. A glycan (N-linked (GlcNAc...) asparagine) is linked at asparagine 329. Glutamate 356 (charge relay system) is an active-site residue. Asparagine 366 is a glycosylation site (N-linked (GlcNAc...) asparagine). The active-site Charge relay system is the histidine 464.

The protein belongs to the type-B carboxylesterase/lipase family.

It catalyses the reaction a triacylglycerol + H2O = a diacylglycerol + a fatty acid + H(+). This is Lipase 1 (LIP1) from Diutina rugosa (Yeast).